Here is a 332-residue protein sequence, read N- to C-terminus: 2,3-diketo-L-gulonate reductase (332 aa).

His44 (proton donor) is an active-site residue. NAD(+) contacts are provided by residues 168–174 (ITMVDMS), 224–225 (WK), and 304–306 (GHE).

It belongs to the LDH2/MDH2 oxidoreductase family. DlgD subfamily. As to quaternary structure, homodimer.

The protein resides in the cytoplasm. The catalysed reaction is 3-dehydro-L-gulonate + NAD(+) = 2,3-dioxo-L-gulonate + NADH + H(+). The enzyme catalyses 3-dehydro-L-gulonate + NADP(+) = 2,3-dioxo-L-gulonate + NADPH + H(+). In terms of biological role, catalyzes the reduction of 2,3-diketo-L-gulonate in the presence of NADH, to form 3-keto-L-gulonate. In Salmonella typhi, this protein is 2,3-diketo-L-gulonate reductase.